Consider the following 478-residue polypeptide: Pyruvate kinase (478 aa).

Position 36 (arginine 36) interacts with substrate. Positions 38, 40, and 70 each coordinate K(+). 38–41 (NFSH) serves as a coordination point for ATP. Arginine 77 and lysine 160 together coordinate ATP. Glutamate 225 is a Mg(2+) binding site. Substrate contacts are provided by glycine 251, aspartate 252, and threonine 284. Aspartate 252 contacts Mg(2+).

This sequence belongs to the pyruvate kinase family. Homotetramer. The cofactor is Mg(2+). Requires K(+) as cofactor.

It carries out the reaction pyruvate + ATP = phosphoenolpyruvate + ADP + H(+). The protein operates within carbohydrate degradation; glycolysis; pyruvate from D-glyceraldehyde 3-phosphate: step 5/5. With respect to regulation, allosterically activated by AMP and by several sugar phosphates. Belongs to type II PK. This chain is Pyruvate kinase (pykA), found in Haemophilus influenzae (strain ATCC 51907 / DSM 11121 / KW20 / Rd).